The chain runs to 374 residues: Queuine tRNA-ribosyltransferase (374 aa).

Asp91 (proton acceptor) is an active-site residue. Substrate contacts are provided by residues Asp91 to Tyr95, Asp145, Gln189, and Gly216. Residues Gly247–Asp253 form an RNA binding region. Asp266 acts as the Nucleophile in catalysis. The interval Thr271–Arg275 is RNA binding; important for wobble base 34 recognition. Residues Cys304, Cys306, Cys309, and His335 each coordinate Zn(2+).

This sequence belongs to the queuine tRNA-ribosyltransferase family. Homodimer. Within each dimer, one monomer is responsible for RNA recognition and catalysis, while the other monomer binds to the replacement base PreQ1. It depends on Zn(2+) as a cofactor.

It catalyses the reaction 7-aminomethyl-7-carbaguanine + guanosine(34) in tRNA = 7-aminomethyl-7-carbaguanosine(34) in tRNA + guanine. The protein operates within tRNA modification; tRNA-queuosine biosynthesis. In terms of biological role, catalyzes the base-exchange of a guanine (G) residue with the queuine precursor 7-aminomethyl-7-deazaguanine (PreQ1) at position 34 (anticodon wobble position) in tRNAs with GU(N) anticodons (tRNA-Asp, -Asn, -His and -Tyr). Catalysis occurs through a double-displacement mechanism. The nucleophile active site attacks the C1' of nucleotide 34 to detach the guanine base from the RNA, forming a covalent enzyme-RNA intermediate. The proton acceptor active site deprotonates the incoming PreQ1, allowing a nucleophilic attack on the C1' of the ribose to form the product. After dissociation, two additional enzymatic reactions on the tRNA convert PreQ1 to queuine (Q), resulting in the hypermodified nucleoside queuosine (7-(((4,5-cis-dihydroxy-2-cyclopenten-1-yl)amino)methyl)-7-deazaguanosine). The chain is Queuine tRNA-ribosyltransferase from Leptospira borgpetersenii serovar Hardjo-bovis (strain JB197).